The chain runs to 278 residues: HTH-type transcriptional activator RhaS (278 aa).

Residues 174–272 enclose the HTH araC/xylS-type domain; that stretch reads NLLLAWLEDH…NWSPRDIRQG (99 aa). 2 consecutive DNA-binding regions (H-T-H motif) follow at residues 191–212 and 239–262; these read DAVADQFSLSLRTLHRQLKQQT and VTDIAYRCGFSDSNHFSTLFRREF.

Binds DNA as a dimer.

Its subcellular location is the cytoplasm. Activates expression of the rhaBAD and rhaT operons. The protein is HTH-type transcriptional activator RhaS of Shigella sonnei (strain Ss046).